The chain runs to 102 residues: Large ribosomal subunit protein bL21 (102 aa).

Belongs to the bacterial ribosomal protein bL21 family. Part of the 50S ribosomal subunit. Contacts protein L20.

This protein binds to 23S rRNA in the presence of protein L20. The chain is Large ribosomal subunit protein bL21 from Ehrlichia canis (strain Jake).